The following is a 302-amino-acid chain: Probable 2-(5''-triphosphoribosyl)-3'-dephosphocoenzyme-A synthase (302 aa).

This sequence belongs to the CitG/MdcB family.

It catalyses the reaction 3'-dephospho-CoA + ATP = 2'-(5''-triphospho-alpha-D-ribosyl)-3'-dephospho-CoA + adenine. In Albidiferax ferrireducens (strain ATCC BAA-621 / DSM 15236 / T118) (Rhodoferax ferrireducens), this protein is Probable 2-(5''-triphosphoribosyl)-3'-dephosphocoenzyme-A synthase.